Here is a 255-residue protein sequence, read N- to C-terminus: EEF1A lysine methyltransferase 4 (255 aa).

Residues tryptophan 26 and tyrosine 30 each contribute to the S-adenosyl-L-methionine site. The residue at position 39 (tyrosine 39) is a Phosphotyrosine. S-adenosyl-L-methionine contacts are provided by residues tryptophan 41, glycine 66, 88–89 (DY), 113–114 (DV), and lysine 130. The short motif at 129–134 (EKGTLD) is the Required for methyltransferase activity element.

The protein belongs to the methyltransferase superfamily.

The enzyme catalyses L-lysyl-[protein] + S-adenosyl-L-methionine = N(6)-methyl-L-lysyl-[protein] + S-adenosyl-L-homocysteine + H(+). It catalyses the reaction N(6)-methyl-L-lysyl-[protein] + S-adenosyl-L-methionine = N(6),N(6)-dimethyl-L-lysyl-[protein] + S-adenosyl-L-homocysteine + H(+). The catalysed reaction is N(6),N(6)-dimethyl-L-lysyl-[protein] + S-adenosyl-L-methionine = N(6),N(6),N(6)-trimethyl-L-lysyl-[protein] + S-adenosyl-L-homocysteine + H(+). Functionally, protein-lysine methyltransferase that efficiently catalyzes three successive methylations on 'Lys-36' in eukaryotic translation elongation factor 1 alpha (EEF1A1 or EEF1A2). The polypeptide is EEF1A lysine methyltransferase 4 (Homo sapiens (Human)).